Here is a 50-residue protein sequence, read N- to C-terminus: Small ribosomal subunit protein eS31 (50 aa).

Positions 22, 25, 40, and 43 each coordinate Zn(2+). The C4-type zinc finger occupies 22–43; sequence CPRCGPGVFMADHGDRWACGKC.

This sequence belongs to the eukaryotic ribosomal protein eS31 family. As to quaternary structure, part of the 30S ribosomal subunit. The cofactor is Zn(2+).

The polypeptide is Small ribosomal subunit protein eS31 (Pyrococcus horikoshii (strain ATCC 700860 / DSM 12428 / JCM 9974 / NBRC 100139 / OT-3)).